A 647-amino-acid polypeptide reads, in one-letter code: Exoribonuclease 2 (647 aa).

The RNB domain occupies 190–519; it reads REDLTSLPFV…NHRLLKAIIK (330 aa). The region spanning 564–646 is the S1 motif domain; the sequence is EQRFSAEVID…ETRSIVARPV (83 aa).

This sequence belongs to the RNR ribonuclease family. RNase II subfamily.

Its subcellular location is the cytoplasm. It carries out the reaction Exonucleolytic cleavage in the 3'- to 5'-direction to yield nucleoside 5'-phosphates.. Functionally, involved in mRNA degradation. Hydrolyzes single-stranded polyribonucleotides processively in the 3' to 5' direction. The polypeptide is Exoribonuclease 2 (Erwinia tasmaniensis (strain DSM 17950 / CFBP 7177 / CIP 109463 / NCPPB 4357 / Et1/99)).